Here is a 318-residue protein sequence, read N- to C-terminus: Methionyl-tRNA formyltransferase (318 aa).

110–113 is a (6S)-5,6,7,8-tetrahydrofolate binding site; sequence SLLP.

This sequence belongs to the Fmt family.

The catalysed reaction is L-methionyl-tRNA(fMet) + (6R)-10-formyltetrahydrofolate = N-formyl-L-methionyl-tRNA(fMet) + (6S)-5,6,7,8-tetrahydrofolate + H(+). In terms of biological role, attaches a formyl group to the free amino group of methionyl-tRNA(fMet). The formyl group appears to play a dual role in the initiator identity of N-formylmethionyl-tRNA by promoting its recognition by IF2 and preventing the misappropriation of this tRNA by the elongation apparatus. This Geobacillus sp. (strain WCH70) protein is Methionyl-tRNA formyltransferase.